Here is a 167-residue protein sequence, read N- to C-terminus: Zymogen granule membrane protein 16 (167 aa).

The signal sequence occupies residues 1–16 (MLTVALLALLCASASG). Residues 24–159 (SSYSGEYGGG…IDAIGLHWDV (136 aa)) form the Jacalin-type lectin domain.

The protein belongs to the jacalin lectin family. Highly expressed in liver. Detected at lower levels in colon, ileum and jejunum.

Its subcellular location is the secreted. It localises to the extracellular space. It is found in the extracellular matrix. The protein resides in the zymogen granule lumen. The protein localises to the golgi apparatus lumen. In terms of biological role, may play a role in protein trafficking. May act as a linker molecule between the submembranous matrix on the luminal side of zymogen granule membrane (ZGM) and aggregated secretory proteins during granule formation in the TGN. This is Zymogen granule membrane protein 16 (ZG16) from Homo sapiens (Human).